The sequence spans 252 residues: MGQKETFYRNWNGGGDFLRTVFGLGGLDHTNDSPAEQRYVNSLETSSMMAENDIGSLMPLVYTTVAFFVAVVLPHGSPMSNSHSSKKAFALLNWPRVLTSRNIWSISHGIFAASMFGSFWVQSAVGTIPLFGIVGFSWAVTCRIPYYLLHDELYRSSTQRNRQGDDLTDSQGLIHGIHNFSICLAQIVVLLMINTVWILASDDDGDSFLVWFLLLGGACALLAMYFTTRLREPENIKYEEIAMEEGDYGFSE.

Transmembrane regions (helical) follow at residues 54 to 74 (IGSL…VVLP) and 116 to 136 (FGSF…IVGF). An N-linked (GlcNAc...) asparagine glycan is attached at Asn-179. 2 helical membrane-spanning segments follow: residues 180–200 (FSIC…WILA) and 208–228 (FLVW…YFTT).

It belongs to the major facilitator superfamily.

The protein localises to the membrane. Its pathway is mycotoxin biosynthesis. Functionally, MFS-type transporter; part of the gene cluster that mediates the biosynthesis of the mycotoxin cyclochlorotine, a hepatotoxic and carcinogenic cyclic chlorinated pentapeptide. Most likely responsible for cyclochlorotine secretion and thereby may contribute to intrinsic resistance. The protein is MFS-type transporter cctQ of Talaromyces islandicus (Penicillium islandicum).